The sequence spans 206 residues: MARYTGATCRLCRREGMKLFLKGDRCFTDKCAFVRRSYAPGQHGASKKKMSNYGIQLREKQKARRIYGILEGQFRTYYEKAEHMKGITGENLLKLLEMRLDNVVYRLGYGASRNEARQLVTHGHFLVNGKKVDICSYHVSMNDVITVCEKSRSSEKFKTFVENPKTLPKWLEANVDNYEGKVVAEPSREDIDVPVNETLIVELYSK.

In terms of domain architecture, S4 RNA-binding spans Met98–Asn163.

The protein belongs to the universal ribosomal protein uS4 family. In terms of assembly, part of the 30S ribosomal subunit. Contacts protein S5. The interaction surface between S4 and S5 is involved in control of translational fidelity.

One of the primary rRNA binding proteins, it binds directly to 16S rRNA where it nucleates assembly of the body of the 30S subunit. Its function is as follows. With S5 and S12 plays an important role in translational accuracy. The chain is Small ribosomal subunit protein uS4 from Clostridium botulinum (strain Alaska E43 / Type E3).